Here is a 146-residue protein sequence, read N- to C-terminus: UPF0178 protein BCAH820_3075 (146 aa).

This sequence belongs to the UPF0178 family.

In Bacillus cereus (strain AH820), this protein is UPF0178 protein BCAH820_3075.